Here is a 299-residue protein sequence, read N- to C-terminus: 5-azacytidine resistance protein azr1 (299 aa).

The PPM-type phosphatase domain maps to 35–293 (KSHFPSPATL…DDTTITCLLI (259 aa)).

In terms of biological role, confers azacytidine resistance in high copy. The chain is 5-azacytidine resistance protein azr1 (azr1) from Schizosaccharomyces pombe (strain 972 / ATCC 24843) (Fission yeast).